The primary structure comprises 139 residues: Coat protein TP2 (139 aa).

The protein localises to the virion. This chain is Coat protein TP2, found in Thermoproteus tenax virus 1 (strain KRA1) (TTV1).